Here is a 595-residue protein sequence, read N- to C-terminus: MPTQRDSSTMSHTVACGGGGDHSHQVRVKAYYRGDIMITHFEPSISFEGLCSEVRDMCSFDNEQPFTMKWIDEEGDPCTVSSQLELEEAFRLYELNKDSELLIHVFPCVPERPGMPCPGEDKSIYRRGARRWRKLYCANGHTFQAKRFNRRAHCAICTDRIWGLGRQGYKCINCKLLVHKKCHKLVTIECGRHSLPPEPMMPMDQTMHPDHTQTVIPYNPSSHESLDQVGEEKEAMNTRESGKASSSLGLQDFDLLRVIGRGSYAKVLLVRLKKTDRIYAMKVVKKELVNDDEDIDWVQTEKHVFEQASNHPFLVGLHSCFQTESRLFFVIEYVNGGDLMFHMQRQRKLPEEHARFYSAEISLALNYLHERGIIYRDLKLDNVLLDSEGHIKLTDYGMCKEGLRPGDTTSTFCGTPNYIAPEILRGEDYGFSVDWWALGVLMFEMMAGRSPFDIVGSSDNPDQNTEDYLFQVILEKQIRIPRSLSVKAASVLKSFLNKDPKERLGCHPQTGFADIQGHPFFRNVDWDMMEQKQVVPPFKPNISGEFGLDNFDSQFTNEPVQLTPDDDDIVRKIDQSEFEGFEYINPLLMSAEECV.

The span at 1-12 (MPTQRDSSTMSH) shows a compositional bias: polar residues. The segment at 1 to 21 (MPTQRDSSTMSHTVACGGGGD) is disordered. Pro2 bears the N-acetylproline mark. Positions 2–28 (PTQRDSSTMSHTVACGGGGDHSHQVRV) are required for interaction with RAB2. A regulatory domain region spans residues 2-252 (PTQRDSSTMS…KASSSLGLQD (251 aa)). The residue at position 3 (Thr3) is a Phosphothreonine. 2 positions are modified to phosphoserine: Ser7 and Ser8. Thr9 carries the post-translational modification Phosphothreonine. Residues 25 to 108 (QVRVKAYYRG…SELLIHVFPC (84 aa)) enclose the PB1 domain. Residues 72-91 (DEEGDPCTVSSQLELEEAFR) form an interaction with PARD6A region. The Pseudosubstrate signature appears at 125–134 (YRRGARRWRK). The Phorbol-ester/DAG-type zinc-finger motif lies at 140–190 (GHTFQAKRFNRRAHCAICTDRIWGLGRQGYKCINCKLLVHKKCHKLVTIEC). Residues 253–521 (FDLLRVIGRG…FADIQGHPFF (269 aa)) form the Protein kinase domain. 259–267 (IGRGSYAKV) serves as a coordination point for ATP. Residues Tyr264 and Tyr279 each carry the phosphotyrosine; by SRC modification. Lys282 contacts ATP. Tyr333 is modified (phosphotyrosine; by SRC). The active-site Proton acceptor is the Asp377. 2 positions are modified to phosphothreonine: Thr411 and Thr563. The region spanning 522-593 (RNVDWDMMEQ…INPLLMSAEE (72 aa)) is the AGC-kinase C-terminal domain.

This sequence belongs to the protein kinase superfamily. AGC Ser/Thr protein kinase family. PKC subfamily. In terms of assembly, forms a complex with SQSTM1 and MP2K5. Interacts directly with SQSTM1. Interacts with IKBKB. Interacts with PARD6A, PARD6B and PARD6G. Part of a quaternary complex containing aPKC, PARD3, a PARD6 protein (PARD6A, PARD6B or PARD6G) and a GTPase protein (CDC42 or RAC1). Part of a complex with LLGL1 and PARD6B. Interacts with ADAP1/CENTA1. Interaction with SMG1, through the ZN-finger domain, activates the kinase activity. Interacts with CDK7. Forms a complex with RAB2A and GAPDH involved in recruitment onto the membrane of vesicular tubular clusters (VTCs). Interacts with ECT2 ('Thr-359' phosphorylated form). Interacts with VAMP2. Interacts with WDFY2 (via WD repeats 1-3). Post-translationally, phosphorylation at Thr-411 in the activation loop is not mandatory for activation. Upon neuronal growth factor (NGF) stimulation, phosphorylated by SRC at Tyr-264, Tyr-279 and Tyr-333. Phosphorylation on Tyr-264 facilitates binding to KPNB1/importin-beta regulating entry of PRKCI into the nucleus. Phosphorylation on Tyr-333 is important for NF-kappa-B stimulation. Phosphorylated at Thr-563 during the initial phase of long term potentiation.

The protein localises to the cytoplasm. It localises to the membrane. The protein resides in the endosome. Its subcellular location is the nucleus. It catalyses the reaction L-seryl-[protein] + ATP = O-phospho-L-seryl-[protein] + ADP + H(+). It carries out the reaction L-threonyl-[protein] + ATP = O-phospho-L-threonyl-[protein] + ADP + H(+). Atypical PKCs (PRKCI and PRKCZ) exhibit an elevated basal enzymatic activity (that may be due to the interaction with SMG1 or SQSTM1) and are not regulated by diacylglycerol, phosphatidylserine, phorbol esters or calcium ions. Two specific sites, Thr-411 (activation loop of the kinase domain) and Thr-563 (turn motif), need to be phosphorylated for its full activation. Might also be a target for novel lipid activators that are elevated during nutrient-stimulated insulin secretion. In terms of biological role, calcium- and diacylglycerol-independent serine/ threonine-protein kinase that plays a general protective role against apoptotic stimuli, is involved in NF-kappa-B activation, cell survival, differentiation and polarity, and contributes to the regulation of microtubule dynamics in the early secretory pathway. Is necessary for BCR-ABL oncogene-mediated resistance to apoptotic drug in leukemia cells, protecting leukemia cells against drug-induced apoptosis. In cultured neurons, prevents amyloid beta protein-induced apoptosis by interrupting cell death process at a very early step. In glioblastoma cells, may function downstream of phosphatidylinositol 3-kinase (PI3K) and PDPK1 in the promotion of cell survival by phosphorylating and inhibiting the pro-apoptotic factor BAD. Can form a protein complex in non-small cell lung cancer (NSCLC) cells with PARD6A and ECT2 and regulate ECT2 oncogenic activity by phosphorylation, which in turn promotes transformed growth and invasion. In response to nerve growth factor (NGF), acts downstream of SRC to phosphorylate and activate IRAK1, allowing the subsequent activation of NF-kappa-B and neuronal cell survival. Functions in the organization of the apical domain in epithelial cells by phosphorylating EZR. This step is crucial for activation and normal distribution of EZR at the early stages of intestinal epithelial cell differentiation. Forms a protein complex with LLGL1 and PARD6B independently of PARD3 to regulate epithelial cell polarity. Plays a role in microtubule dynamics in the early secretory pathway through interaction with RAB2A and GAPDH and recruitment to vesicular tubular clusters (VTCs). In human coronary artery endothelial cells (HCAEC), is activated by saturated fatty acids and mediates lipid-induced apoptosis. Downstream of PI3K is required for insulin-stimulated glucose transport. Activates RAB4A and promotes its association with KIF3A which is required for the insulin-induced SLC2A4/GLUT4 translocation in adipocytes. Is essential in early embryogenesis and development of differentiating photoreceptors by playing a role in the establishment of epithelial and neuronal polarity. Involved in early synaptic long term potentiation phase in CA1 hippocampal cells and short term memory formation. The chain is Protein kinase C iota type (Prkci) from Mus musculus (Mouse).